The primary structure comprises 287 residues: NAD kinase (287 aa).

Residue Asp-70 is the Proton acceptor of the active site. NAD(+) contacts are provided by residues 70–71 (DG), 144–145 (ND), Arg-155, Lys-172, Asp-174, 185–190 (TAYSLS), and Gln-244.

The protein belongs to the NAD kinase family. A divalent metal cation serves as cofactor.

The protein localises to the cytoplasm. It carries out the reaction NAD(+) + ATP = ADP + NADP(+) + H(+). In terms of biological role, involved in the regulation of the intracellular balance of NAD and NADP, and is a key enzyme in the biosynthesis of NADP. Catalyzes specifically the phosphorylation on 2'-hydroxyl of the adenosine moiety of NAD to yield NADP. This is NAD kinase from Solibacter usitatus (strain Ellin6076).